The chain runs to 453 residues: Verruculogen prenyltransferase (453 aa).

Residue E89 coordinates substrate. The dimethylallyl diphosphate site is built by R102, K194, Y196, K273, Y275, Y378, Y443, and Y447.

This sequence belongs to the tryptophan dimethylallyltransferase family.

The catalysed reaction is verruculogen + dimethylallyl diphosphate = fumitremorgin A + diphosphate. It participates in mycotoxin biosynthesis. Functionally, verruculogen prenyltransferase; part of the gene cluster that mediates the biosynthesis of fumitremorgins, indole alkaloids that carry not only intriguing chemical structures, but also interesting biological and pharmacological activities. The biosynthesis of fumitremorgin-type alkaloids begins by condensation of the two amino acids L-tryptophan and L-proline to brevianamide F, catalyzed by the non-ribosomal peptide synthetase ftmPS/ftmA. Brevianamide F is then prenylated by the prenyltransferase ftmPT1/ftmB in the presence of dimethylallyl diphosphate, resulting in the formation of tryprostatin B. The three cytochrome P450 monooxygenases, ftmP450-1/ftmC, ftmP450-2/ftmE and ftmP450-3/FtmG, are responsible for the conversion of tryprostatin B to 6-hydroxytryprostatin B, tryprostatin A to fumitremorgin C and fumitremorgin C to 12,13-dihydroxyfumitremorgin C, respectively. The putative methyltransferase ftmMT/ftmD is expected for the conversion of 6-hydroxytryprostatin B to tryprostatin A. FtmPT2/FtmH catalyzes the prenylation of 12,13-dihydroxyfumitre-morgin C in the presence of dimethylallyl diphosphate, resulting in the formation of fumitremorgin B. Fumitremorgin B is further converted to verruculogen by ftmOx1/ftmF via the insertion of an endoperoxide bond between the two prenyl moieties. Finally, verruculogen is further converted to fumitremorgin A by the verruculogen prenyltransferase ftmPT3. The protein is Verruculogen prenyltransferase of Neosartorya fischeri (strain ATCC 1020 / DSM 3700 / CBS 544.65 / FGSC A1164 / JCM 1740 / NRRL 181 / WB 181) (Aspergillus fischerianus).